The chain runs to 332 residues: Tsukubadiene synthase (332 aa).

Mg(2+)-binding residues include aspartate 75 and glutamate 80. Positions 75 to 80 (DDHLDE) match the DDXXXE motif motif. Arginine 165 serves as a coordination point for substrate. Residues serine 212, serine 216, and glutamate 220 each coordinate Mg(2+). An SXXXSXXXE motif motif is present at residues 212–220 (SDLHSFQLE). Position 298–299 (298–299 (RY)) interacts with substrate.

This sequence belongs to the terpene synthase family. Requires Mg(2+) as cofactor.

It carries out the reaction (2E,6E,10E)-geranylgeranyl diphosphate = tsukubadiene + diphosphate. Its function is as follows. Catalyzes the formation of the 5-9-5 ring skeleton (3S,6S,11R,14S)-tsukubadiene from geranylgeranyl diphosphate (GGPP) via a 1,11-cyclization and a 10Re,14Re-cyclization. The polypeptide is Tsukubadiene synthase (Streptomyces tsukubensis (strain DSM 42081 / NBRC 108919 / NRRL 18488 / 9993)).